The primary structure comprises 219 residues: 7-carboxy-7-deazaguanine synthase (219 aa).

Substrate contacts are provided by residues I22–G24 and R37. The Radical SAM core domain maps to L28 to K219. Residues C41, C45, and C48 each contribute to the [4Fe-4S] cluster site. T81 contacts substrate. S-adenosyl-L-methionine contacts are provided by residues G83 and S130–K132.

Belongs to the radical SAM superfamily. 7-carboxy-7-deazaguanine synthase family. Homodimer. It depends on [4Fe-4S] cluster as a cofactor. Requires S-adenosyl-L-methionine as cofactor. Mg(2+) serves as cofactor.

The enzyme catalyses 6-carboxy-5,6,7,8-tetrahydropterin + H(+) = 7-carboxy-7-deazaguanine + NH4(+). Its pathway is purine metabolism; 7-cyano-7-deazaguanine biosynthesis. Its function is as follows. Catalyzes the complex heterocyclic radical-mediated conversion of 6-carboxy-5,6,7,8-tetrahydropterin (CPH4) to 7-carboxy-7-deazaguanine (CDG), a step common to the biosynthetic pathways of all 7-deazapurine-containing compounds. The chain is 7-carboxy-7-deazaguanine synthase from Aquifex aeolicus (strain VF5).